The chain runs to 378 residues: MSHVDDGFRSLTLKRFPQTDDVNPLLAWEAADEYLLQQLDETEIRGPVLILNDTFGALSCALAEHSPYSIGDSYLSELGTRENLRHNGIAESSVTFLDSTADYPQAPGVVLIKVPKTLALLEQQLRALRKVVTAQTRIIAGAKARDIHTSTLELFEKVLGPTTTTLAWKKARLINCTFSHPQLADAPQTLSWKLEDTGWTIHNHANVFSRTGLDIGARFFMQHLPENLDGEIVDLGCGNGVIGLSLLAKNPQANVVFVDESPMAVDSSRLNVETNLPEAFERCEFMINNALSGVEPFRFNAVFCNPPFHQKHALTDNIAWEMFHHARRCLKINGELYIVANRHLDYFHKLKKIFGNCATIATNNKFVILKAVKQGHRR.

Belongs to the methyltransferase superfamily. RlmG family.

It localises to the cytoplasm. It catalyses the reaction guanosine(1835) in 23S rRNA + S-adenosyl-L-methionine = N(2)-methylguanosine(1835) in 23S rRNA + S-adenosyl-L-homocysteine + H(+). In terms of biological role, specifically methylates the guanine in position 1835 (m2G1835) of 23S rRNA. This Salmonella dublin (strain CT_02021853) protein is Ribosomal RNA large subunit methyltransferase G.